Reading from the N-terminus, the 316-residue chain is MPLEFEKPILELERRIAELKETAKATGVDLEAEIRLLEERLARLRKETYENLTPWQRVQLARASGRPTTLDVLEKAFQDFIELHGDRAFADDPAIVGGLAYLEGEKVVVVGHQKGRDTKENLQRNFGMPHPEGYRKAMRLMDLADRFGYPFLTFVDTPGAYPGVSAEERGQAWVIAQSIQRMSRLRVPAVTVILGEGGSGGALAIAVANRVLILENAWYSVISPESCAAILWRDAKEAPKAAEALKLTAKDLLQLKVVDAIVPEPEGGAHKDPDRAIRNIKEALLKALEELKGLSPEALYEDRYRRFRSLGAFAEP.

One can recognise a CoA carboxyltransferase C-terminal domain in the interval leucine 36–glutamate 290.

The protein belongs to the AccA family. Acetyl-CoA carboxylase is a heterohexamer composed of biotin carboxyl carrier protein (AccB), biotin carboxylase (AccC) and two subunits each of ACCase subunit alpha (AccA) and ACCase subunit beta (AccD).

The protein resides in the cytoplasm. The catalysed reaction is N(6)-carboxybiotinyl-L-lysyl-[protein] + acetyl-CoA = N(6)-biotinyl-L-lysyl-[protein] + malonyl-CoA. It functions in the pathway lipid metabolism; malonyl-CoA biosynthesis; malonyl-CoA from acetyl-CoA: step 1/1. Functionally, component of the acetyl coenzyme A carboxylase (ACC) complex. First, biotin carboxylase catalyzes the carboxylation of biotin on its carrier protein (BCCP) and then the CO(2) group is transferred by the carboxyltransferase to acetyl-CoA to form malonyl-CoA. In Thermus thermophilus (strain ATCC 27634 / DSM 579 / HB8), this protein is Acetyl-coenzyme A carboxylase carboxyl transferase subunit alpha.